Reading from the N-terminus, the 181-residue chain is Malignant T-cell-amplified sequence 2 (181 aa).

The PUA domain maps to Leu-92–Asn-171.

Belongs to the MCTS1 family.

The protein resides in the cytoplasm. The sequence is that of Malignant T-cell-amplified sequence 2 from Mus musculus (Mouse).